We begin with the raw amino-acid sequence, 447 residues long: MTKKIITLVGRPNVGKSTLFNRLSIRKKAIVHDLPGVTRDRKYTDGKIGSFKFLLIDTPGLEENPDNMGKRLMEQTTQAILEADLICLMVDGRSGVLPDDKLLSSFVRKYNKHCILVVNKCEKAFDFDKEYYKLGFDSIVIISAEHGTGLIDLYDEIIAKLSIKESIERNIADPFRGDCLQIVVSGRPNAGKSTFINAIINDERLLTGPEAGITRESIEIDWQYKNTHIKLIDTAGLRKKSTITASLEKLSTSDTINAIKFANTVILMIDALAHLKQQDLNIANHIINEGRSIIIVVNKWDLVEESEKEAFQAEFYYQINTHLPQIKGVPVLFISAINKQNIEQVLDACLKIYKIWNKKITTGKLNEWLNFTTKVHTLPLQKCGRRVRIKYMTQTKTRPPTFKLFSNNPEKITDSYTRYLVNNMRDTFDMHGIPIRFTYVKNKNPYV.

EngA-type G domains are found at residues 4-165 (KIIT…SIKE) and 180-357 (LQIV…KIWN). Residues 10 to 17 (GRPNVGKS), 57 to 61 (DTPGL), 119 to 122 (NKCE), 186 to 193 (GRPNAGKS), 233 to 237 (DTAGL), and 298 to 301 (NKWD) contribute to the GTP site. In terms of domain architecture, KH-like spans 358-443 (KKITTGKLNE…PIRFTYVKNK (86 aa)).

It belongs to the TRAFAC class TrmE-Era-EngA-EngB-Septin-like GTPase superfamily. EngA (Der) GTPase family. Associates with the 50S ribosomal subunit.

Its function is as follows. GTPase that plays an essential role in the late steps of ribosome biogenesis. This chain is GTPase Der, found in Rickettsia typhi (strain ATCC VR-144 / Wilmington).